The sequence spans 401 residues: L-threonine ammonia-lyase (401 aa).

Lys51 carries the N6-(pyridoxal phosphate)lysine modification. Pyridoxal 5'-phosphate-binding positions include Asn78, 178–181 (GGGL), and Ser301. In terms of domain architecture, ACT spans 326 to 401 (FIETFVMDRP…AKGYEVRIVG (76 aa)).

Belongs to the serine/threonine dehydratase family. Homotetramer. Requires pyridoxal 5'-phosphate as cofactor.

It carries out the reaction L-threonine = 2-oxobutanoate + NH4(+). The catalysed reaction is L-serine = pyruvate + NH4(+). It participates in amino-acid biosynthesis; L-isoleucine biosynthesis; 2-oxobutanoate from L-threonine: step 1/1. Activity is insensitive to allosteric regulators L-valine and L-isoleucine at low concentrations, while these L-amino acids are inhibitors at high concentrations. Is insensitive to ammonium chloride and AMP. Inhibited in the presence of aminoxyacetic acid (AOAA), an inhibitor of pyridoxal phosphate-dependent enzymes. Functionally, catalyzes the conversion of L-threonine to 2-oxobutanoate and ammonia. Can also use L-serine, but the catalytic efficiency toward L-threonine is about sixfold higher than that toward L-serine. Also shows weak activity toward L-allo-threonine, but cannot use the corresponding D-amino acids. Does not exhibit racemase activity toward various amino acids, including serine. Physiologically, is likely involved in the threonine-dependent pathway of isoleucine biosynthesis. This Thermotoga maritima (strain ATCC 43589 / DSM 3109 / JCM 10099 / NBRC 100826 / MSB8) protein is L-threonine ammonia-lyase.